Here is a 184-residue protein sequence, read N- to C-terminus: Probable sensory rhodopsin transducer (184 aa).

A run of 2 helical transmembrane segments spans residues 14-34 (TLGV…VNVY) and 52-72 (GLVS…TIIG). One can recognise an HAMP domain in the interval 73–125 (RERTAAVETLAAQARQIEQGELDVDLATNRTDDVGDIYRALAVLRDSEQLDRQ).

The protein belongs to the methyl-accepting chemotaxis (MCP) protein family. In terms of assembly, interacts with Xop2/SRM.

The protein resides in the membrane. Its function is as follows. The HtrM-Xop2/SRM complex may interact with CheB or CheR and modulate their availability to Sop1 or Sop2. The chain is Probable sensory rhodopsin transducer (htrM) from Haloarcula marismortui (strain ATCC 43049 / DSM 3752 / JCM 8966 / VKM B-1809) (Halobacterium marismortui).